The sequence spans 228 residues: UPF0758 protein CTC_02075 (228 aa).

Residues N106–L228 form the MPN domain. Zn(2+)-binding residues include H177, H179, and D190. The JAMM motif signature appears at H177–D190.

This sequence belongs to the UPF0758 family.

The chain is UPF0758 protein CTC_02075 from Clostridium tetani (strain Massachusetts / E88).